Consider the following 169-residue polypeptide: 2-C-methyl-D-erythritol 2,4-cyclodiphosphate synthase (169 aa).

2 residues coordinate a divalent metal cation: D13 and H15. 4-CDP-2-C-methyl-D-erythritol 2-phosphate is bound by residues 13-15 (DVH) and 39-40 (HS). Position 47 (H47) interacts with a divalent metal cation. 4-CDP-2-C-methyl-D-erythritol 2-phosphate contacts are provided by residues 61 to 63 (DIG), 66 to 70 (FPDTD), F144, and R147.

This sequence belongs to the IspF family. Homotrimer. A divalent metal cation serves as cofactor.

The catalysed reaction is 4-CDP-2-C-methyl-D-erythritol 2-phosphate = 2-C-methyl-D-erythritol 2,4-cyclic diphosphate + CMP. It participates in isoprenoid biosynthesis; isopentenyl diphosphate biosynthesis via DXP pathway; isopentenyl diphosphate from 1-deoxy-D-xylulose 5-phosphate: step 4/6. In terms of biological role, involved in the biosynthesis of isopentenyl diphosphate (IPP) and dimethylallyl diphosphate (DMAPP), two major building blocks of isoprenoid compounds. Catalyzes the conversion of 4-diphosphocytidyl-2-C-methyl-D-erythritol 2-phosphate (CDP-ME2P) to 2-C-methyl-D-erythritol 2,4-cyclodiphosphate (ME-CPP) with a corresponding release of cytidine 5-monophosphate (CMP). The chain is 2-C-methyl-D-erythritol 2,4-cyclodiphosphate synthase from Cupriavidus necator (strain ATCC 17699 / DSM 428 / KCTC 22496 / NCIMB 10442 / H16 / Stanier 337) (Ralstonia eutropha).